Consider the following 283-residue polypeptide: 3-methyl-2-oxobutanoate hydroxymethyltransferase (283 aa).

Mg(2+)-binding residues include D44 and D83. 3-methyl-2-oxobutanoate is bound by residues 44–45, D83, and K112; that span reads DS. E114 serves as a coordination point for Mg(2+). The Proton acceptor role is filled by E181.

The protein belongs to the PanB family. As to quaternary structure, homodecamer; pentamer of dimers. Mg(2+) serves as cofactor.

It is found in the cytoplasm. The enzyme catalyses 3-methyl-2-oxobutanoate + (6R)-5,10-methylene-5,6,7,8-tetrahydrofolate + H2O = 2-dehydropantoate + (6S)-5,6,7,8-tetrahydrofolate. Its pathway is cofactor biosynthesis; coenzyme A biosynthesis. Its function is as follows. Catalyzes the reversible reaction in which hydroxymethyl group from 5,10-methylenetetrahydrofolate is transferred onto alpha-ketoisovalerate to form ketopantoate. The protein is 3-methyl-2-oxobutanoate hydroxymethyltransferase of Pyrococcus furiosus (strain ATCC 43587 / DSM 3638 / JCM 8422 / Vc1).